The following is a 329-amino-acid chain: Serine, glycine and glutamine-rich protein (329 aa).

The first 16 residues, 1–16 (MKTVLLFVVLVGLAYC), serve as a signal peptide directing secretion. Over residues 38–48 (SSSSSSSSSSS) the composition is skewed to low complexity. The interval 38-80 (SSSSSSSSSSSSGGGGSSGGGASGGGGGSSSGGGGASGGGGGG) is disordered. Positions 49–80 (SGGGGSSGGGASGGGGGSSSGGGGASGGGGGG) are enriched in gly residues.

In terms of tissue distribution, prismatic layer of shell (at protein level). Expressed primarily in the mantle with highest level in the mantle edge and lower level in the mantle pallium.

The protein resides in the secreted. In Pinctada maxima (Silver-lipped pearl oyster), this protein is Serine, glycine and glutamine-rich protein.